A 545-amino-acid polypeptide reads, in one-letter code: Chaperonin GroEL (545 aa).

ATP is bound by residues 29–32 (TLGP), Lys50, 86–90 (DGTTT), Gly413, and Asp495.

The protein belongs to the chaperonin (HSP60) family. In terms of assembly, forms a cylinder of 14 subunits composed of two heptameric rings stacked back-to-back. Interacts with the co-chaperonin GroES.

It localises to the cytoplasm. It catalyses the reaction ATP + H2O + a folded polypeptide = ADP + phosphate + an unfolded polypeptide.. Together with its co-chaperonin GroES, plays an essential role in assisting protein folding. The GroEL-GroES system forms a nano-cage that allows encapsulation of the non-native substrate proteins and provides a physical environment optimized to promote and accelerate protein folding. This chain is Chaperonin GroEL, found in Borrelia garinii subsp. bavariensis (strain ATCC BAA-2496 / DSM 23469 / PBi) (Borreliella bavariensis).